The sequence spans 526 residues: MELTLWTYEGPPHVGAMRVASSMKEIHYVLHAPQGDTYADLLFTMIERRGKRPPVTYTTFQARDLGGDTAELVKRNISEAVERFKPKTLLIGESCTAELIQDQPGALAKGMGFNIPIVNLELPAYSKKENWGASETFYQIIRTLLNDKTNEINNINPQRWKSLGRRPKVNILGPTLLGFRCRDDVIEIQRILSEQGIDTNVVAPLGSSPDDIKRLIDADINICLYQEIAETSCEWLKRKCGMEFTTTIPIGIKNTINFINEVHDKLGLPLTNKEELEHKSKLPWYSKSIDSNYLTGKRVFIFGDGTHAIAAAKIAKDELGFEVVGLGTYSREMARQVRAAAKDLNIEALITNSYLEVEDAMKKASPELVLGTQMERHSAKRLGIPCSVISTPMHVQDVPARYSPQMGWEGANVIFDDWVHPLMMGLEEHLIDMFKHDFEFVDGHQSHLGHTATKGLDNIEDEHGLKNDTLKKNGGVLWTESGRAELTKVPFFVRGKVKSNTEKYALSKGLPEISDETLYDAKAYFS.

Residue aspartate 36 participates in [4Fe-4S] cluster binding. Aspartate 290 functions as the Proton donor in the catalytic mechanism. Glycine 425–leucine 426 lines the substrate pocket.

It belongs to the ChlB/BchB/BchZ family. In terms of assembly, protochlorophyllide reductase is composed of three subunits; ChlL, ChlN and ChlB. Forms a heterotetramer of two ChlB and two ChlN subunits. [4Fe-4S] cluster serves as cofactor.

It catalyses the reaction chlorophyllide a + oxidized 2[4Fe-4S]-[ferredoxin] + 2 ADP + 2 phosphate = protochlorophyllide a + reduced 2[4Fe-4S]-[ferredoxin] + 2 ATP + 2 H2O. It functions in the pathway porphyrin-containing compound metabolism; chlorophyll biosynthesis (light-independent). Functionally, component of the dark-operative protochlorophyllide reductase (DPOR) that uses Mg-ATP and reduced ferredoxin to reduce ring D of protochlorophyllide (Pchlide) to form chlorophyllide a (Chlide). This reaction is light-independent. The NB-protein (ChlN-ChlB) is the catalytic component of the complex. The sequence is that of Light-independent protochlorophyllide reductase subunit B from Prochlorococcus marinus (strain MIT 9515).